The chain runs to 451 residues: MERPSLSRRTSSSTVSTDGEGVYSRSTKERKRNFIVNSRLKRGGGHVRVNRSGRLGSVTMRPSALTRAHSQNPNSSLVNNSSAVSHLTKQRSLNDLHELNGPKHVAKNGLIPLTQRKPNCVWDDAPVDNDSTAGNLDSDSALPTPSVTTNEAADSSRASSPVTRVVAVHDNKKKIINSNISNAPPFNNTDVQASARPPAAGQDDSAADASTTKSSPVHNEVMAEPLPHSNNREVTQATNQPKWQIHSGSDIASEPPTLSRGNSLSLLANRKVPSTNVKKSQAELYDLGSSTSRTQQKLLIQRASSKFDIVEDDMDTNPSKRFSNPHTKHIMDLVRTQYRNVLRTRELIPEFLEKIRSSYSNNQNFDSQNAFNTSAAGTAGTREETISNGQNGIVASAETSKKDDGVQSASLNASMSARSHARQRSIHVPKTRKDTDYESIHQKLLQLWSQG.

The tract at residues 1 to 35 is disordered; the sequence is MERPSLSRRTSSSTVSTDGEGVYSRSTKERKRNFI. Low complexity predominate over residues 7–17; sequence SRRTSSSTVST. Position 70 is a phosphoserine (Ser70). 3 disordered regions span residues 122 to 164, 176 to 264, and 362 to 437; these read WDDA…PVTR, INSN…GNSL, and NQNF…DTDY. Residues 129 to 162 are compositionally biased toward polar residues; the sequence is NDSTAGNLDSDSALPTPSVTTNEAADSSRASSPV. Positions 203–215 are enriched in low complexity; sequence DDSAADASTTKSS. Composition is skewed to polar residues over residues 228–242, 362–376, and 407–417; these read HSNN…NQPK, NQNF…TSAA, and QSASLNASMSA. A compositionally biased stretch (basic residues) spans 419-430; that stretch reads SHARQRSIHVPK.

Belongs to the TORC subunit TCO89 family. The target of rapamycin complex 1 (TORC1) is composed of at least mip1, pop3/wat1, tco89, toc1 and tor2. Post-translationally, either Thr-10, Ser-11, Ser-12, Ser-13 or Thr-14 and Ser-214 or Ser-215 and Ser-247 or Ser-249 are phosphorylated as well.

The protein resides in the cytoplasm. Component of TORC1, which regulates multiple cellular processes to control cell growth in response to environmental signals. Tor2 is essential for growth. Nutrient limitation and environmental stress signals cause inactivation of TORC1. Active TORC1 positively controls cell growth and ribosome biogenesis by regulating ribosomal protein gene expression. TORC1 negatively controls G1 cell-cycle arrest, sexual development and amino acid uptake. Represses mating, meiosis and sporulation efficiency by interfering with the functions of the transcription factor ste11 and the meiosis-promoting RNA-binding protein mei2. The polypeptide is Target of rapamycin complex 1 subunit tco89 (Schizosaccharomyces pombe (strain 972 / ATCC 24843) (Fission yeast)).